We begin with the raw amino-acid sequence, 433 residues long: Glutamate-1-semialdehyde 2,1-aminomutase (433 aa).

Position 267 is an N6-(pyridoxal phosphate)lysine (Lys267).

This sequence belongs to the class-III pyridoxal-phosphate-dependent aminotransferase family. HemL subfamily. As to quaternary structure, homodimer. Pyridoxal 5'-phosphate is required as a cofactor.

Its subcellular location is the cytoplasm. The catalysed reaction is (S)-4-amino-5-oxopentanoate = 5-aminolevulinate. It functions in the pathway porphyrin-containing compound metabolism; protoporphyrin-IX biosynthesis; 5-aminolevulinate from L-glutamyl-tRNA(Glu): step 2/2. The sequence is that of Glutamate-1-semialdehyde 2,1-aminomutase from Syntrophobacter fumaroxidans (strain DSM 10017 / MPOB).